The chain runs to 130 residues: Small ribosomal subunit protein uS9 (130 aa).

The tract at residues 109–130 (RAKERKKYGLKAARRAPQFSKR) is disordered. A compositionally biased stretch (basic residues) spans 111–130 (KERKKYGLKAARRAPQFSKR).

The protein belongs to the universal ribosomal protein uS9 family.

The polypeptide is Small ribosomal subunit protein uS9 (Heliobacterium modesticaldum (strain ATCC 51547 / Ice1)).